The chain runs to 402 residues: Zinc finger CCHC domain-containing protein 12 (402 aa).

The interval 308 to 341 is disordered; the sequence is IDSPHNSRAQFPSTSGGSGYKNNGPGEMRRARKR. Residues 311 to 322 show a composition bias toward polar residues; it reads PHNSRAQFPSTS. Residues 345-362 form a CCHC-type zinc finger; that stretch reads IRCSYCGEEGHSKETCDN.

This sequence belongs to the ZCCHC12 family. Interacts with SMAD1 and CREB-binding protein (CBP). Forms a protein-DNA complex through its association with SMAD1.

In terms of biological role, transcriptional coactivator in the bone morphogenetic protein (BMP)-signaling pathway. It positively modulates BMP signaling by interacting with SMAD1 and associating with CBP in the transcription complex. It contributes to the BMP-induced enhancement of cholinergic-neuron-specific gene expression. This Homo sapiens (Human) protein is Zinc finger CCHC domain-containing protein 12 (ZCCHC12).